A 1387-amino-acid polypeptide reads, in one-letter code: DNA-directed RNA polymerase subunit beta'' (1387 aa).

Zn(2+)-binding residues include Cys224, Cys295, Cys302, and Cys305.

This sequence belongs to the RNA polymerase beta' chain family. RpoC2 subfamily. As to quaternary structure, in plastids the minimal PEP RNA polymerase catalytic core is composed of four subunits: alpha, beta, beta', and beta''. When a (nuclear-encoded) sigma factor is associated with the core the holoenzyme is formed, which can initiate transcription. It depends on Zn(2+) as a cofactor.

It is found in the plastid. The protein resides in the chloroplast. The enzyme catalyses RNA(n) + a ribonucleoside 5'-triphosphate = RNA(n+1) + diphosphate. DNA-dependent RNA polymerase catalyzes the transcription of DNA into RNA using the four ribonucleoside triphosphates as substrates. This is DNA-directed RNA polymerase subunit beta'' from Panax ginseng (Korean ginseng).